Here is a 335-residue protein sequence, read N- to C-terminus: Probable cytosolic iron-sulfur protein assembly protein Ciao1 (335 aa).

WD repeat units lie at residues 12-51, 57-96, 101-140, 146-185, 192-231, 250-289, and 301-335; these read GHKG…WSTK, GHKR…FECN, GHEN…EFEC, PHTQ…NDWD, SHTS…NTAG, QHSR…KPDE, and AHDQ…KVTE.

The protein belongs to the WD repeat CIA1 family. Conjugated to URM1, a ubiquitin-like protein.

Essential component of the cytosolic iron-sulfur (Fe/S) protein assembly machinery. Required for the maturation of extramitochondrial Fe/S proteins. In Drosophila melanogaster (Fruit fly), this protein is Probable cytosolic iron-sulfur protein assembly protein Ciao1.